A 480-amino-acid polypeptide reads, in one-letter code: Gamma-aminobutyric acid receptor subunit rho-1 (480 aa).

A signal peptide spans 1–21 (MLAVRNMKFGIFLLWWGWVLA). At 22-281 (AESTVHWPGR…LYINFTLRRH (260 aa)) the chain is on the extracellular side. The tract at residues 31-67 (REVHEPSKKGSRPQRQRRGAHDDAHKQGSPILKRSSD) is disordered. The span at 39 to 48 (KGSRPQRQRR) shows a compositional bias: basic residues. Arginine 126 serves as a coordination point for 4-aminobutanoate. Asparagine 141 is a glycosylation site (N-linked (GlcNAc...) asparagine). 4-aminobutanoate is bound at residue serine 190. A disulfide bridge links cysteine 199 with cysteine 213. Glutamate 218 contacts 4-aminobutanoate. 2 N-linked (GlcNAc...) asparagine glycosylation sites follow: asparagine 235 and asparagine 275. Residues 282–302 (IFFFLLQTYFPATLMVMLSWV) form a helical membrane-spanning segment. Residues 303–314 (SFWIDRRAVPAR) are Cytoplasmic-facing. Residues 315 to 335 (VPLGITTVLTMSTIITGVNAS) traverse the membrane as a helical segment. The Extracellular segment spans residues 336–346 (MPRVSYIKAVD). Residues 347–367 (IYLWVSFVFVFLSVLEYAAVN) traverse the membrane as a helical segment. At 368-458 (YLTTVQERKE…MRINTHAIDK (91 aa)) the chain is on the cytoplasmic side. A helical transmembrane segment spans residues 459 to 479 (YSRIIFPAAYILFNLIYWSIF). A topological domain (extracellular) is located at residue serine 480.

The protein belongs to the ligand-gated ion channel (TC 1.A.9) family. Gamma-aminobutyric acid receptor (TC 1.A.9.5) subfamily. GABRR1 sub-subfamily. In terms of assembly, three rho subunits (rho-1/GBRR1, rho-2/GBRR2 and rho-3/GBRR3) coassemble either to form functional homopentamers or heteropentamers. Rho-1/GBRR1 subunits can also associate with alpha-1/GBRA1 subunits to form a functional GABAAR. Interacts with SQSTM1.

The protein resides in the postsynaptic cell membrane. The protein localises to the cell membrane. The enzyme catalyses chloride(in) = chloride(out). Its activity is regulated as follows. Inhibited by TPMPA, a rho-specific antagonist. Inhibited by picrotoxin, when forming a homopentamer. In contrast with other GABAARs, rho-1 GABAAR is not inhibited by bicuculline, when forming a homopentamer. Down-regulated by external protons when forming a homopentamer. Functionally, rho subunit of the pentameric ligand-gated chloride channels responsible for mediating the effects of gamma-aminobutyric acid (GABA), the major inhibitory neurotransmitter in the brain. Rho-containing GABA-gated chloride channels are a subclass of GABA(A) receptors (GABAARs) entirely composed of rho subunits, where GABA molecules bind at the rho intersubunit interfaces. When activated by GABA, rho-GABAARs selectively allow the flow of chloride anions across the cell membrane down their electrochemical gradient. Rho-1 subunits are primarily expressed in retina where rho-1-containing GABAARs may play a role in retinal neurotransmission. Rho-1 GABAARs are also involved in neuronal tonic (extrasynaptic) and phasic (synaptic) transmission in the Purkinje neurons of the cerebellum. Rho-1 GABAARs may also contribute to the regulation of glial development in the cerebellum by controlling extrasynaptic transmission. The polypeptide is Gamma-aminobutyric acid receptor subunit rho-1 (Rattus norvegicus (Rat)).